The sequence spans 515 residues: Bifunctional NAD(P)H-hydrate repair enzyme Nnr (515 aa).

The NAD(P)H-hydrate epimerase stretch occupies residues 1–227 (MTDHTMKKNP…GLDSWLAGQE (227 aa)). A YjeF N-terminal domain is found at 23-225 (IRRGEREAAD…SLGLDSWLAG (203 aa)). The NADPHX 1; for epimerase activity stretch occupies residues 71–75 (NNGGD). Asn72 and Asp135 together coordinate K(+). The NADPHX 1; for epimerase activity stretch occupies residues 139–145 (GTGLRQA). Asp168 serves as a coordination point for (6S)-NADPHX. K(+) is bound at residue Ser171. Positions 234–501 (SAEQLSHWLK…STLQRIVNPE (268 aa)) constitute a YjeF C-terminal domain. The interval 235-515 (AEQLSHWLKP…NHDESSNSAP (281 aa)) is ADP-dependent (S)-NAD(P)H-hydrate dehydratase. Position 329 (Gly329) interacts with (6S)-NADPHX. The tract at residues 375-381 (HPGEAAR) is NADPHX 2; for dehydratase activity. ADP contacts are provided by residues 412-416 (KGAGT) and 432-441 (NAGMASGGMG). Asp442 is a (6S)-NADPHX binding site.

It in the N-terminal section; belongs to the NnrE/AIBP family. In the C-terminal section; belongs to the NnrD/CARKD family. K(+) serves as cofactor.

The enzyme catalyses (6S)-NADHX + ADP = AMP + phosphate + NADH + H(+). It catalyses the reaction (6S)-NADPHX + ADP = AMP + phosphate + NADPH + H(+). It carries out the reaction (6R)-NADHX = (6S)-NADHX. The catalysed reaction is (6R)-NADPHX = (6S)-NADPHX. Bifunctional enzyme that catalyzes the epimerization of the S- and R-forms of NAD(P)HX and the dehydration of the S-form of NAD(P)HX at the expense of ADP, which is converted to AMP. This allows the repair of both epimers of NAD(P)HX, a damaged form of NAD(P)H that is a result of enzymatic or heat-dependent hydration. The polypeptide is Bifunctional NAD(P)H-hydrate repair enzyme Nnr (nnr) (Escherichia coli (strain K12)).